The chain runs to 238 residues: Probable transcriptional regulatory protein SZO_02930 (238 aa).

Belongs to the TACO1 family. YeeN subfamily.

The protein resides in the cytoplasm. This chain is Probable transcriptional regulatory protein SZO_02930, found in Streptococcus equi subsp. zooepidemicus (strain H70).